The primary structure comprises 72 residues: Heat-stable enterotoxin A2 (72 aa).

A signal peptide spans 1 to 19; that stretch reads MKKSILFIFLSVLSFSPFA. A propeptide spanning residues 20–53 is cleaved from the precursor; it reads QDAKPAGSSKEKITLESKKCNIVKKNNESSPESM. Disulfide bonds link Cys59/Cys64, Cys60/Cys68, and Cys63/Cys71.

It belongs to the heat-stable enterotoxin family.

The protein resides in the secreted. Its function is as follows. Toxin which activates the particulate form of guanylate cyclase and increases cyclic GMP levels within the host intestinal epithelial cells. The chain is Heat-stable enterotoxin A2 (sta2) from Escherichia coli.